Reading from the N-terminus, the 940-residue chain is Isoleucine--tRNA ligase (940 aa).

A 'HIGH' region motif is present at residues 58 to 68; sequence PYANGSIHIGH. Glu-564 contributes to the L-isoleucyl-5'-AMP binding site. The 'KMSKS' region signature appears at 605–609; the sequence is KMSKS. Residue Lys-608 participates in ATP binding. The Zn(2+) site is built by Cys-903, Cys-906, Cys-923, and Cys-926.

The protein belongs to the class-I aminoacyl-tRNA synthetase family. IleS type 1 subfamily. Monomer. Requires Zn(2+) as cofactor.

It is found in the cytoplasm. It catalyses the reaction tRNA(Ile) + L-isoleucine + ATP = L-isoleucyl-tRNA(Ile) + AMP + diphosphate. Functionally, catalyzes the attachment of isoleucine to tRNA(Ile). As IleRS can inadvertently accommodate and process structurally similar amino acids such as valine, to avoid such errors it has two additional distinct tRNA(Ile)-dependent editing activities. One activity is designated as 'pretransfer' editing and involves the hydrolysis of activated Val-AMP. The other activity is designated 'posttransfer' editing and involves deacylation of mischarged Val-tRNA(Ile). The protein is Isoleucine--tRNA ligase of Shewanella sediminis (strain HAW-EB3).